The chain runs to 290 residues: 4-hydroxybenzoate octaprenyltransferase (290 aa).

Transmembrane regions (helical) follow at residues L33–V53, L99–I119, L141–V161, L213–N233, G234–Q254, and A268–L288.

Belongs to the UbiA prenyltransferase family. Mg(2+) serves as cofactor.

It localises to the cell inner membrane. The enzyme catalyses all-trans-octaprenyl diphosphate + 4-hydroxybenzoate = 4-hydroxy-3-(all-trans-octaprenyl)benzoate + diphosphate. The protein operates within cofactor biosynthesis; ubiquinone biosynthesis. Its function is as follows. Catalyzes the prenylation of para-hydroxybenzoate (PHB) with an all-trans polyprenyl group. Mediates the second step in the final reaction sequence of ubiquinone-8 (UQ-8) biosynthesis, which is the condensation of the polyisoprenoid side chain with PHB, generating the first membrane-bound Q intermediate 3-octaprenyl-4-hydroxybenzoate. The sequence is that of 4-hydroxybenzoate octaprenyltransferase from Cronobacter sakazakii (strain ATCC BAA-894) (Enterobacter sakazakii).